Here is a 2470-residue protein sequence, read N- to C-terminus: Serine/threonine-protein kinase mTor (2470 aa).

8 HEAT repeats span residues 172 to 209 (QHIL…VTAQ), 746 to 785 (SYMN…VNGG), 791 to 829 (LWAD…ATGR), 835 to 873 (HKYP…MDPY), 962 to 999 (PYLA…FVKL), 1043 to 1080 (DYLA…FGST), 1083 to 1122 (YYLP…QLDF), and 1124 to 1160 (DFSS…QLGK). The 555-residue stretch at 1349-1903 (LLGTRAMACR…VYPLTVASKS (555 aa)) folds into the FAT domain. TPR repeat units lie at residues 1407–1440 (ANEL…DSSD) and 1718–1751 (MATW…DPNW). An HEAT 9 repeat occupies 1854-1891 (NTWLQVIPQLIARIDTHRQLVGQLIHQLLMDIGKNHPQ). Residues 2077–2389 (IKTNLQVITS…SLSNSVEDSL (313 aa)) form the PI3K/PI4K catalytic domain. Residues 2083–2089 (VITSKQR) form a G-loop region. The interval 2256–2264 (GLGDRHPSN) is catalytic loop. The activation loop stretch occupies residues 2276-2301 (HIDFGDCFEVAMTREKFPEKIPFRLT). Residues 2364–2389 (AGAGAPGGRGGSGMQDSLSNSVEDSL) are disordered. Residues 2367–2376 (GAPGGRGGSG) show a composition bias toward gly residues. Positions 2377-2386 (MQDSLSNSVE) are enriched in polar residues. The 33-residue stretch at 2438–2470 (KSVNEQSQVELLIQQATNNENLCQCYIGWCPFW) folds into the FATC domain.

The protein belongs to the PI3/PI4-kinase family. May be part of a minimal complex, TORC1, consisting of mTor, raptor and lst8. May be part of a minimal complex, TORC2, consisting of mTor, rictor and lst8. Self-associates; assembles into homomultimeric complexes. Component of a multiprotein complex.

It catalyses the reaction L-seryl-[protein] + ATP = O-phospho-L-seryl-[protein] + ADP + H(+). The catalysed reaction is L-threonyl-[protein] + ATP = O-phospho-L-threonyl-[protein] + ADP + H(+). Its function is as follows. Promotes cell and tissue growth, maintains tissue homeostatis and controls responses to environmental stress and aging. Regulates growth during animal development by coupling growth factor signaling to nutrient availability. Central regulators of autophagy. May be involved in atg1 phosphorylation. May also be involved, directly or indirectly, in the control of neuronal function. Phosphorylates S6K/p70S6K, in vitro. May regulate the activity of S6K. Overexpression inhibits growth and reduces cell size. Affects the timing of neuronal cell differentiation. Hyperactivation of the signaling leads to accelerated differentiation, whereas inhibition of the signaling retards differentiation. Thus, in addition to controlling growth of the cell in which it resides, it can also influence growth of distant cells and organs during development via a humoral mechanism. As part of the TORC1 complex regulates energy homeostasis and promotes certain aspects of larval growth by negatively regulating REPTOR. REPTOR functions downstream of TORC1 to regulate the expression of stress response genes in response to TORC1 inhibition resulting from nutrient deprivation. When TORC1 activity is high it phosphorylates REPTOR which inhibits its recruitment into the nucleus and antagonizes their function. This function is essential under normal feeding conditions to promote TORC1-dependent growth during larval development and, in adults and larvae to prevent the REPTOR-dependent expression of nutrient stress response genes. In short, during development, it primarily controls growth, whereas in the adult, where there is relatively little growth, it controls aging and other aspects of nutrient-related physiology. Rag GTPases act as activators of TORC1 in response to amino acid signals. The chain is Serine/threonine-protein kinase mTor from Drosophila melanogaster (Fruit fly).